A 237-amino-acid polypeptide reads, in one-letter code: DCN1-like protein 5 (237 aa).

Phosphoserine is present on residues Ser9, Ser41, and Ser48. The DCUN1 domain maps to 46-232 (FSSKKCLAWF…LLDEFVEWQK (187 aa)).

As to quaternary structure, part of a complex that contains DCUN1D5, CUL1 and RBX1; this interaction is bridged by CUL1. Interacts (via the DCUN1 domain) with the unneddylated cullins: interacts with CUL1, CUL2, CUL3, CUL4A, CUL4B and CUL5; these interactions promote the cullin neddylation and the identity of the cullin dictates the affinity of the interaction. Interacts (via DCUN1 domain) with UBE2M (N-terminally acetylated form) and probably with UBE2F (N-terminally acetylated form). May also interact with regulators or subunits of cullin-RING ligases such as RBX1, RNF7, ELOB and DDB1; these interactions are bridged by cullins. Interacts with CAND1; this interaction is bridged by cullins and strongly inhibits the neddylation of cullins. These CAND-cullin-DCNL complexes can only be neddylated in the presence of a substrate adapter. In terms of processing, phosphorylation at Ser-41 is independent of cullin's interaction. Phosphorylated in response to both TICAM1 and MYD88 dependent Toll-like receptor (TLR) pathway activation. Phosphorylated in response to IL1B stimulation.

It localises to the nucleus. The protein localises to the cytoplasm. Its subcellular location is the cytoskeleton. The protein resides in the spindle. In terms of biological role, contributes to the neddylation of all cullins by transferring NEDD8 from N-terminally acetylated NEDD8-conjugating E2s enzyme to different cullin C-terminal domain-RBX complexes which is necessary for the activation of cullin-RING E3 ubiquitin ligases (CRLs). May play a role in DNA damage response and may participate in cell proliferation and anchorage-independent cell growth. In Pongo abelii (Sumatran orangutan), this protein is DCN1-like protein 5.